Reading from the N-terminus, the 687-residue chain is Mediator of RNA polymerase II transcription subunit 17 (687 aa).

The span at 30–43 (LSSNPNSSLHSPTS) shows a compositional bias: low complexity. 2 disordered regions span residues 30 to 70 (LSSN…NKTK) and 130 to 189 (QLGS…ETDD). Composition is skewed to basic and acidic residues over residues 56–70 (TSIRLEGDELENKTK), 136–147 (SDGHNSEKKDTD), and 167–183 (KDNPVDSRNETDHKTNE).

Belongs to the Mediator complex subunit 17 family. As to quaternary structure, component of the Mediator complex, which is composed of at least 21 subunits that form three structurally distinct submodules. The Mediator head module contains MED6, MED8, MED11, SRB4/MED17, SRB5/MED18, ROX3/MED19, SRB2/MED20 and SRB6/MED22, the middle module contains MED1, MED4, NUT1/MED5, MED7, CSE2/MED9, NUT2/MED10, SRB7/MED21 and SOH1/MED31, and the tail module contains MED2, PGD1/MED3, RGR1/MED14, GAL11/MED15 and SIN4/MED16. The head and the middle modules interact directly with RNA polymerase II, whereas the elongated tail module interacts with gene-specific regulatory proteins. The head module may also interact with the TFIIF complex. SRB4/MED17 interacts directly with MED6, MED11, ROX3/MED19, SRB2/MED20 and SRB6/MED22. Interacts directly with the activator GAL4.

The protein resides in the nucleus. Its function is as follows. Component of the Mediator complex, a coactivator involved in the regulated transcription of nearly all RNA polymerase II-dependent genes. Mediator functions as a bridge to convey information from gene-specific regulatory proteins to the basal RNA polymerase II transcription machinery. The Mediator complex, having a compact conformation in its free form, is recruited to promoters by direct interactions with regulatory proteins and serves for the assembly of a functional preinitiation complex with RNA polymerase II and the general transcription factors. The Mediator complex unfolds to an extended conformation and partially surrounds RNA polymerase II, specifically interacting with the unphosphorylated form of the C-terminal domain (CTD) of RNA polymerase II. The Mediator complex dissociates from the RNA polymerase II holoenzyme and stays at the promoter when transcriptional elongation begins. The polypeptide is Mediator of RNA polymerase II transcription subunit 17 (SRB4) (Saccharomyces cerevisiae (strain ATCC 204508 / S288c) (Baker's yeast)).